A 208-amino-acid chain; its full sequence is Large ribosomal subunit protein bL25 (208 aa).

Belongs to the bacterial ribosomal protein bL25 family. CTC subfamily. In terms of assembly, part of the 50S ribosomal subunit; part of the 5S rRNA/L5/L18/L25 subcomplex. Contacts the 5S rRNA. Binds to the 5S rRNA independently of L5 and L18.

Its function is as follows. This is one of the proteins that binds to the 5S RNA in the ribosome where it forms part of the central protuberance. The polypeptide is Large ribosomal subunit protein bL25 (Bartonella quintana (strain Toulouse) (Rochalimaea quintana)).